A 510-amino-acid chain; its full sequence is Maturase K (510 aa).

It belongs to the intron maturase 2 family. MatK subfamily.

The protein localises to the plastid. Its subcellular location is the chloroplast. Its function is as follows. Usually encoded in the trnK tRNA gene intron. Probably assists in splicing its own and other chloroplast group II introns. The protein is Maturase K of Spirodela intermedia (Intermediate duckweed).